Reading from the N-terminus, the 460-residue chain is Lipase member H-A (460 aa).

The signal sequence occupies residues 1–26 (MLLSFYFNGLLLVGCLLSWGRSDTEG). Residues asparagine 67 and asparagine 75 are each glycosylated (N-linked (GlcNAc...) asparagine). The active-site Nucleophile is serine 163. Asparagine 177 carries an N-linked (GlcNAc...) asparagine glycan. Catalysis depends on aspartate 187, which acts as the Charge relay system. The cysteines at positions 242 and 255 are disulfide-linked. Catalysis depends on histidine 257, which acts as the Charge relay system. Intrachain disulfides connect cysteine 279–cysteine 290 and cysteine 293–cysteine 301. N-linked (GlcNAc...) asparagine glycosylation is present at asparagine 289. An N-linked (GlcNAc...) asparagine glycan is attached at asparagine 366. The cysteines at positions 436 and 455 are disulfide-linked.

This sequence belongs to the AB hydrolase superfamily. Lipase family.

It is found in the secreted. The protein localises to the cell membrane. The catalysed reaction is 1-hexadecanoyl-2-(9Z-octadecenoyl)-sn-glycero-3-phosphate + H2O = 2-(9Z-octadecenoyl)-sn-glycero-3-phosphate + hexadecanoate + H(+). Hydrolyzes specifically phosphatidic acid (PA) to produce 2-acyl lysophosphatidic acid (LPA; a potent bioactive lipid mediator) and fatty acid. Does not hydrolyze other phospholipids, like phosphatidylserine (PS), phosphatidylcholine (PC) and phosphatidylethanolamine (PE) or triacylglycerol (TG). The chain is Lipase member H-A (liph-a) from Xenopus laevis (African clawed frog).